A 362-amino-acid polypeptide reads, in one-letter code: MRDETPEQPAPLRFGYTTGSCATATSLAAARLLLAGQADDAVEIVLPKGQRVMMRLEFCRATADGAEAGTIKDAGDDPDVTHGALIFARVALAAAPGVRFHAGPGVGTVTRAGLTLPVGEPAINPVPRQMMTTHLEALAAEHGYAGGFDVTIGVEGGEALALKTMNPRLGIVGGLSILGTTGIVRPFSCSAYIASIHQGIDVARANGIAHIAACTGNASEDAMRAHYQLPDMALIEMGDFAGAVLKHLRRAPVARLSMCGGFGKLSKLAAGHLDLHSRHSSIDLPLLAQWAAEAGANEALQAAMRAANTSQEALKLAQADGVPLGDLVCAHALRVARDIVPPSVAVEMFAIDRQGRFVGAAR.

It belongs to the CbiD family.

It catalyses the reaction Co-precorrin-5B + S-adenosyl-L-methionine = Co-precorrin-6A + S-adenosyl-L-homocysteine. It functions in the pathway cofactor biosynthesis; adenosylcobalamin biosynthesis; cob(II)yrinate a,c-diamide from sirohydrochlorin (anaerobic route): step 6/10. Catalyzes the methylation of C-1 in cobalt-precorrin-5B to form cobalt-precorrin-6A. The protein is Cobalt-precorrin-5B C(1)-methyltransferase of Burkholderia cenocepacia (strain HI2424).